The sequence spans 193 residues: Dual-action ribosomal maturation protein DarP (193 aa).

Positions 1–10 (MRGRDEDTGE) are enriched in basic and acidic residues. 2 disordered regions span residues 1–20 (MRGRDEDTGEFRGASRSQQR) and 171–193 (QEQGLESGDSGLEDGESALEDDE). Residues 181–193 (GLEDGESALEDDE) are compositionally biased toward acidic residues.

It belongs to the DarP family.

It localises to the cytoplasm. Member of a network of 50S ribosomal subunit biogenesis factors which assembles along the 30S-50S interface, preventing incorrect 23S rRNA structures from forming. Promotes peptidyl transferase center (PTC) maturation. The chain is Dual-action ribosomal maturation protein DarP from Xanthomonas oryzae pv. oryzae (strain MAFF 311018).